A 198-amino-acid chain; its full sequence is Protoplast secreted protein 2 (198 aa).

The first 21 residues, 1-21 (MPRVAIIIYTLYGHVAATAEA), serve as a signal peptide directing secretion. Positions 22–191 (EKKGIEAAGG…QVHEIQGKTF (170 aa)) constitute a Flavodoxin-like domain.

The protein belongs to the WrbA family.

The protein resides in the secreted. In Saccharomyces cerevisiae (strain ATCC 204508 / S288c) (Baker's yeast), this protein is Protoplast secreted protein 2 (PST2).